Consider the following 422-residue polypeptide: UDP-N-acetylglucosamine 1-carboxyvinyltransferase (422 aa).

Position 22–23 (22–23 (KN)) interacts with phosphoenolpyruvate. Residue R93 participates in UDP-N-acetyl-alpha-D-glucosamine binding. C117 functions as the Proton donor in the catalytic mechanism. The residue at position 117 (C117) is a 2-(S-cysteinyl)pyruvic acid O-phosphothioketal. UDP-N-acetyl-alpha-D-glucosamine contacts are provided by residues 122–126 (RPVDL), D308, and I330.

Belongs to the EPSP synthase family. MurA subfamily.

The protein localises to the cytoplasm. It catalyses the reaction phosphoenolpyruvate + UDP-N-acetyl-alpha-D-glucosamine = UDP-N-acetyl-3-O-(1-carboxyvinyl)-alpha-D-glucosamine + phosphate. It functions in the pathway cell wall biogenesis; peptidoglycan biosynthesis. Its function is as follows. Cell wall formation. Adds enolpyruvyl to UDP-N-acetylglucosamine. The chain is UDP-N-acetylglucosamine 1-carboxyvinyltransferase from Legionella pneumophila (strain Paris).